Consider the following 157-residue polypeptide: Baculoviral IAP repeat-containing protein 5.2-B (157 aa).

The stretch at 31–101 (RLRTFSNWPF…KHSPSCLFIA (71 aa)) is one BIR repeat. At Thr47 the chain carries Phosphothreonine; by CDK1. Residues Cys70, Cys73, His90, and Cys97 each coordinate Zn(2+).

This sequence belongs to the IAP family. In terms of assembly, component of the CPC at least composed of survivin/birc5, incenp, cdca8/borealin and/or cdca9/dasra-A, and aurkb/aurora-B. Interacts directly with incenp (via N-terminus). Interacts with rxra; the interaction is stronger in the absence of 9-cis retinoic acids. In terms of processing, ubiquitination is required for centrosome-targeting. As to expression, exhibits strong and homogeneous expression in developing oocytes. In embryos, expressed in the animal hemisphere from one-cell to yolk plug stages, and highly expressed in the future brain and dorsal region of the neural tube at the neurula stage and early tail-bud stage. At tadpole stages, expression is restricted at a low level to the head region.

It is found in the cytoplasm. The protein localises to the nucleus. The protein resides in the chromosome. Its subcellular location is the centromere. It localises to the cytoskeleton. It is found in the spindle. Does not appear to exhibit anti-apoptotic activity. Plays a role in increasing blood vessel size during development. Component of the chromosomal passenger complex (CPC), a complex that acts as a key regulator of mitosis. The CPC complex has essential functions at the centromere in ensuring correct chromosome alignment and segregation and is required for chromatin-induced microtubule stabilization and spindle assembly. The chain is Baculoviral IAP repeat-containing protein 5.2-B (birc5.2-b) from Xenopus laevis (African clawed frog).